The following is a 193-amino-acid chain: Ion-translocating oxidoreductase complex subunit A (193 aa).

6 consecutive transmembrane segments (helical) span residues 5 to 25 (ILLI…FLGL), 39 to 59 (IGMG…AYLV), 65 to 85 (IPLE…AVIV), 102 to 122 (LLGI…VALL), 134 to 154 (VLYG…FSAL), and 171 to 191 (SIAL…TGLV).

Belongs to the NqrDE/RnfAE family. In terms of assembly, the complex is composed of six subunits: RnfA, RnfB, RnfC, RnfD, RnfE and RnfG.

It is found in the cell inner membrane. Functionally, part of a membrane-bound complex that couples electron transfer with translocation of ions across the membrane. This Glaesserella parasuis serovar 5 (strain SH0165) (Haemophilus parasuis) protein is Ion-translocating oxidoreductase complex subunit A.